The primary structure comprises 1775 residues: Internalin I (1775 aa).

The signal sequence occupies residues 1-28; sequence MKKKFSIVIISVLLLGYLAPFDTLLVGA. A compositionally biased stretch (low complexity) spans 36–50; it reads DTTVKTAETETATEA. The segment at 36-97 is disordered; it reads DTTVKTAETE…SNIKTEINTD (62 aa). Over residues 58–85 the composition is skewed to basic and acidic residues; sequence DNEKAEEPKEAEASKETTEKEEKAKTKE. LRR repeat units lie at residues 152–176, 180–201, 202–224, 225–247, 248–269, 274–295, 296–318, 319–341, 342–364, 365–386, 387–409, 410–431, 432–453, 454–475, 476–497, 498–519, 520–541, 542–563, 564–585, 586–607, 608–629, 630–650, 654–675, 682–704, 705–726, 727–748, and 749–770; these read AISQLDLSGETGNDPTDISNIEGLQ, NLTSLNLSENNISDLAPIKDLV, NLVSLNLSSNRTLVNLSGVEGLV, NLQELNVSANKALEDISQVAALP, VLKEISAQGCNIKTLELDNPAG, ELETFYLQENDLTDLTSLAKLP, KLKNLYIKGNASLKSLATLKGAT, KLQLIDASNCTDLETLGDISGLS, ELEMIQLSGCSKLKEITSLKDLP, NLVNITADSCAIEDLGTLNNLP, KLQTLILSDNKDLTNINAITDMP, QLKTLALDGCGITSIGTLDNLP, KLEKLDLKENQLTSISEINDLP, RLSYLDVSVNYLTTIGELKKLP, LLEWLNVSSNRLSDVSTLTNFP, SLNYINVSNNVIRTVGKMTELP, SLKEFYAQNNNVSDISMIHDMP, NLRKVDASNNLITNIGTFDNLP, KLQNLDVHSNRITNTSVIHDLP, SLETFYAQNNLITNIGTMDNLP, ELTYVDLSFNRIPSLAPIGDLP, KLEILKVTDNYSYLRSLGTMD, KLRNLELQNNYLNYTGTEGNLS, NLTELNLRDNGYISDISGLSTLS, RLIYLNLDSNKIKDISALSNLT, TLQELTLENNQIEDISALSDLD, and NLNKLALSKNKIIDISPAANMV. Positions 782–869 constitute an LRRCT domain; the sequence is TYTLPTVLSY…SAVKVTANAE (88 aa). 3 consecutive MucBP domains span residues 1507-1566, 1572-1631, and 1641-1702; these read DAAA…EQTV, AIEP…PQTI, and SKKS…SQTV. The interval 1713–1737 is disordered; the sequence is SKDEPKVKGKTNQPPSADTKLKVDN. The LPXTG sorting signal signature appears at 1740 to 1744; it reads LPATG. Residue Thr1743 is modified to Pentaglycyl murein peptidoglycan amidated threonine. Residues 1744 to 1775 constitute a propeptide, removed by sortase; it reads GDTENMALAVLIGFNMLLVASIFLFRKPKTNQ.

This sequence belongs to the internalin family.

It is found in the secreted. Its subcellular location is the cell wall. Its function is as follows. A role in virulence could not be demonstrated. This is Internalin I (inlI) from Listeria monocytogenes serotype 4b (strain F2365).